Reading from the N-terminus, the 295-residue chain is MADNDRDGWDPASGVGLSATEGAAARAVVGRRKTPLVRDPFAEPLVCAVGVDSLTRLAQQSGVDGESGFAIPRMVDWIAARTRFFDDYFNAGQTDGIRQSVILGAGLDSRTYRLPWLPGATVYEIDQPGVVEFKNETMDRLQAQPLADRRPVAADLRGDWAPPLRIRGFDPSLPTMWSAEGLLPYLRAEDQMQVLDEISALSSKGSRLAADTVDDIGELAARIALSRGPRNPVAESDADLGGASSSHAVAQRLQSHGWLSNTRPAPQLFAAYAMPPLAEDQELYRKITVVTAMLR.

Residues Asp126 and 155-156 contribute to the S-adenosyl-L-methionine site; that span reads DL.

Belongs to the UPF0677 family.

Its function is as follows. Exhibits S-adenosyl-L-methionine-dependent methyltransferase activity. The protein is Putative S-adenosyl-L-methionine-dependent methyltransferase Mvan_0910 of Mycolicibacterium vanbaalenii (strain DSM 7251 / JCM 13017 / BCRC 16820 / KCTC 9966 / NRRL B-24157 / PYR-1) (Mycobacterium vanbaalenii).